Here is a 455-residue protein sequence, read N- to C-terminus: Kynurenine 3-monooxygenase (455 aa).

It belongs to the aromatic-ring hydroxylase family. KMO subfamily. The cofactor is FAD.

It carries out the reaction L-kynurenine + NADPH + O2 + H(+) = 3-hydroxy-L-kynurenine + NADP(+) + H2O. The protein operates within cofactor biosynthesis; NAD(+) biosynthesis; quinolinate from L-kynurenine: step 1/3. Its function is as follows. Catalyzes the hydroxylation of L-kynurenine (L-Kyn) to form 3-hydroxy-L-kynurenine (L-3OHKyn). Required for synthesis of quinolinic acid. This Xanthomonas oryzae pv. oryzae (strain KACC10331 / KXO85) protein is Kynurenine 3-monooxygenase.